The sequence spans 412 residues: Class E basic helix-loop-helix protein 40 (412 aa).

The segment at 1–139 is essential for interaction with BMAL1, E-box binding and repressor activity against the CLOCK-BMAL1 heterodimer; sequence MERIPSAQPP…LSGRNVETGQ (139 aa). A bHLH domain is found at 52-107; it reads TYKLPHRLIEKKRRDRINECIAQLKDLLPEHLKLTTLGHLEKAVVLELTLKHVKAL. A necessary for interaction with RXRA and repressor activity against RXRA region spans residues 75–79; the sequence is LKDLL. One can recognise an Orange domain in the interval 142–175; sequence FCSGFQTCAREVLQYLAKHENTRDLKSSQLVTHL. K159 is covalently cross-linked (Glycyl lysine isopeptide (Lys-Gly) (interchain with G-Cter in SUMO1, SUMO2 and SUMO3)). K167 participates in a covalent cross-link: Glycyl lysine isopeptide (Lys-Gly) (interchain with G-Cter in SUMO2). Disordered regions lie at residues 183-259 and 275-309; these read LQGG…SEQL and IGAI…LISS. Residue S235 is modified to Phosphoserine. Residues 248–259 are compositionally biased toward basic and acidic residues; sequence ESEKGDLRSEQL. Residue K279 forms a Glycyl lysine isopeptide (Lys-Gly) (interchain with G-Cter in SUMO1); alternate linkage. Residue K279 forms a Glycyl lysine isopeptide (Lys-Gly) (interchain with G-Cter in SUMO1, SUMO2 and SUMO3); alternate linkage. K279 participates in a covalent cross-link: Glycyl lysine isopeptide (Lys-Gly) (interchain with G-Cter in SUMO2); alternate. Residue K288 forms a Glycyl lysine isopeptide (Lys-Gly) (interchain with G-Cter in SUMO2) linkage. At S383 the chain carries Phosphoserine.

In terms of assembly, homodimer. Heterodimer with BHLHE41/DEC2. Interacts with TCF3/E47. Interacts with ubiquitin-conjugating enzyme UBE2I/UBC9. Interacts with HDAC1, SUMO1, RXRA and BMAL1. Post-translationally, ubiquitinated; which may lead to proteasomal degradation. Sumoylation inhibits its ubiquitination and promotes its negative regulation of the CLOCK-BMAL1 heterodimer transcriptional activator activity.

Its subcellular location is the cytoplasm. The protein localises to the nucleus. Functionally, transcriptional repressor involved in the regulation of the circadian rhythm by negatively regulating the activity of the clock genes and clock-controlled genes. Acts as the negative limb of a novel autoregulatory feedback loop (DEC loop) which differs from the one formed by the PER and CRY transcriptional repressors (PER/CRY loop). Both these loops are interlocked as it represses the expression of PER1/2 and in turn is repressed by PER1/2 and CRY1/2. Represses the activity of the circadian transcriptional activator: CLOCK-BMAL1|BMAL2 heterodimer by competing for the binding to E-box elements (5'-CACGTG-3') found within the promoters of its target genes. Negatively regulates its own expression and the expression of DBP and BHLHE41/DEC2. Acts as a corepressor of RXR and the RXR-LXR heterodimers and represses the ligand-induced RXRA and NR1H3/LXRA transactivation activity. May be involved in the regulation of chondrocyte differentiation via the cAMP pathway. Represses the transcription of NR0B2 and attentuates the transactivation of NR0B2 by the CLOCK-BMAL1 complex. Drives the circadian rhythm of blood pressure through transcriptional repression of ATP1B1 in the cardiovascular system. This is Class E basic helix-loop-helix protein 40 (BHLHE40) from Pongo abelii (Sumatran orangutan).